Reading from the N-terminus, the 873-residue chain is Bifunctional uridylyltransferase/uridylyl-removing enzyme (873 aa).

The tract at residues 1-332 (MKYLSPLSLS…HQGEQDDAII (332 aa)) is uridylyltransferase. A uridylyl-removing region spans residues 333–692 (IDDDFQRRGR…ISKNASRGGT (360 aa)). Residues 451 to 573 (VDEHSIRLLK…VRDEERLDYL (123 aa)) form the HD domain. 2 ACT domains span residues 693–777 (EIFV…RPPR) and 800–873 (LMEF…RLSS).

Belongs to the GlnD family. Mg(2+) is required as a cofactor.

It carries out the reaction [protein-PII]-L-tyrosine + UTP = [protein-PII]-uridylyl-L-tyrosine + diphosphate. It catalyses the reaction [protein-PII]-uridylyl-L-tyrosine + H2O = [protein-PII]-L-tyrosine + UMP + H(+). Uridylyltransferase (UTase) activity is inhibited by glutamine, while glutamine activates uridylyl-removing (UR) activity. Functionally, modifies, by uridylylation and deuridylylation, the PII regulatory proteins (GlnB and homologs), in response to the nitrogen status of the cell that GlnD senses through the glutamine level. Under low glutamine levels, catalyzes the conversion of the PII proteins and UTP to PII-UMP and PPi, while under higher glutamine levels, GlnD hydrolyzes PII-UMP to PII and UMP (deuridylylation). Thus, controls uridylylation state and activity of the PII proteins, and plays an important role in the regulation of nitrogen assimilation and metabolism. The sequence is that of Bifunctional uridylyltransferase/uridylyl-removing enzyme from Aliivibrio fischeri (strain MJ11) (Vibrio fischeri).